The chain runs to 146 residues: Hemoglobin subunit beta (146 aa).

Residue valine 1 is modified to N-acetylvaline. A Globin domain is found at 2–146 (HMTDAEKKLV…VANALAHKYH (145 aa)). Threonine 12 carries the post-translational modification Phosphothreonine. Lysine 59 is modified (N6-acetyllysine). Residue histidine 63 coordinates heme b. An N6-acetyllysine modification is found at lysine 82. Residue histidine 92 participates in heme b binding. Cysteine 93 is subject to S-nitrosocysteine. Lysine 144 bears the N6-acetyllysine mark.

Belongs to the globin family. Tetramer of two alpha and two different beta chains. Two external cysteine residues at beta-16 and beta-52 cause reversible polymerization to octamers and most likely irreversible formation of higher polymers. In terms of tissue distribution, red blood cells.

Functionally, involved in oxygen transport from the lung to the various peripheral tissues. The sequence is that of Hemoglobin subunit beta (HBB) from Echinops telfairi (Lesser hedgehog tenrec).